A 205-amino-acid polypeptide reads, in one-letter code: Protein N-terminal glutamine amidohydrolase (205 aa).

Residues C20, H74, and D90 contribute to the active site.

It belongs to the NTAQ1 family. In terms of assembly, monomer.

The enzyme catalyses N-terminal L-glutaminyl-[protein] + H2O = N-terminal L-glutamyl-[protein] + NH4(+). Functionally, mediates the side-chain deamidation of N-terminal glutamine residues to glutamate, an important step in N-end rule pathway of protein degradation. Conversion of the resulting N-terminal glutamine to glutamate renders the protein susceptible to arginylation, polyubiquitination and degradation as specified by the N-end rule. Does not act on substrates with internal or C-terminal glutamine and does not act on non-glutamine residues in any position. The polypeptide is Protein N-terminal glutamine amidohydrolase (tun) (Drosophila virilis (Fruit fly)).